Here is a 351-residue protein sequence, read N- to C-terminus: Transmembrane protein 115 (351 aa).

The Cytoplasmic portion of the chain corresponds to M1–A19. Residues M1–L205 are mediates homooligomerization. Residues S20–V40 form a helical membrane-spanning segment. Residues D41–E97 lie on the Lumenal side of the membrane. Residues L98–L118 traverse the membrane as a helical segment. Residues L119–N126 are Cytoplasmic-facing. Residues L127 to V147 form a helical membrane-spanning segment. The Lumenal segment spans residues A148 to R165. The helical transmembrane segment at V166–L186 threads the bilayer. Topologically, residues Q187–L351 are cytoplasmic. Residues R206 to P229 form a mediates localization to the Golgi region. The segment at D300–L351 is disordered. T329 is modified (phosphothreonine).

The protein belongs to the TMEM115 family. Homooligomer. Interacts with COPB1. May interact with LMAN1. Interacts with the COG complex; probably through COG3.

It is found in the golgi apparatus. Its subcellular location is the golgi stack membrane. May play a role in retrograde transport of proteins from the Golgi to the endoplasmic reticulum. May indirectly play a role in protein glycosylation in the Golgi. The chain is Transmembrane protein 115 from Bos taurus (Bovine).